A 745-amino-acid polypeptide reads, in one-letter code: MQRDYLIRVETESMPDFKRLNGLMIGFVIKGEAHIYDENNMTQCNSGDIFIINHRDLYRFQLQQDGIICYIQFQMKYLADKFDDAHCLYFHLTDATTTKNIHQLRNIMARLVSTHIRHNELSKLTEQQLVIQLLMHMIHYVPRTYHSNQSILNDDKVNQVCDYIELHFHEDLSLSELSEYVGWSESHLSKKFTESLGVGFQHFLNTTRIEHAKLDLTYTDETITDIALQNGFSSAASFARTFKHFTHQTPKQYRGDRPAITENQQSAQHNYHDRELILLLNDYIEEMNHFIEDIEKMNYKEIAFKPTNQQLNQFNHIIQVGYLRNLLNTQYQSQLLTCHHDFQVNEVLAYDVMPYIMKKLNAPFTYDAEISNIFYDIDLCLDFLLDHNFSLTMHLNQYDSRDYIDAFKVFIHHVALHVSHRKDLKFNLYVTTLHTSLIEMIDYFKALFPNGGLYIHLDQATERHLPLLKRLEPHINHFVFDANSNDAVDFNKMNDDEFKTASQMIINKTNYLIDLMHRHNLKRPLILLNWNTLTGDTFITNGEYFRGGIIIEQLLKLSTKVEGIGYWLNYDLHVSHCRNERDYMNSIELFHQYNGKRPVYFTALLFNKLTSNILYSDDTCIVTGTDSNFQILLYDAKHFNPYLALDNQMNMRATEMIHLNINALEDGMYKIKHFTLDKENGALFNLWRKHHTIHGMDKDSIDYVNRMSFPKLEVYDIDITDTLALNIKMITNGIHLIEVKRYPSS.

The HTH araC/xylS-type domain occupies 158–256 (NQVCDYIELH…HQTPKQYRGD (99 aa)). DNA-binding regions (H-T-H motif) lie at residues 175-196 (SELS…TESL) and 223-246 (ITDI…KHFT).

This is an uncharacterized protein from Staphylococcus aureus (strain Mu50 / ATCC 700699).